A 66-amino-acid polypeptide reads, in one-letter code: Large ribosomal subunit protein bL35 (66 aa).

The protein belongs to the bacterial ribosomal protein bL35 family.

The polypeptide is Large ribosomal subunit protein bL35 (Caulobacter vibrioides (strain ATCC 19089 / CIP 103742 / CB 15) (Caulobacter crescentus)).